The sequence spans 221 residues: RNA pyrophosphohydrolase (221 aa).

The Nudix hydrolase domain maps to 6–149 (GFRPNVGIVL…KRSVYALALT (144 aa)). The Nudix box motif lies at 38–59 (GGIDRGETPEQAMFRELHEEVG).

The protein belongs to the Nudix hydrolase family. RppH subfamily. A divalent metal cation serves as cofactor.

Accelerates the degradation of transcripts by removing pyrophosphate from the 5'-end of triphosphorylated RNA, leading to a more labile monophosphorylated state that can stimulate subsequent ribonuclease cleavage. This is RNA pyrophosphohydrolase from Verminephrobacter eiseniae (strain EF01-2).